Consider the following 1224-residue polypeptide: DNA-directed RNA polymerase subunit beta'' (1224 aa).

Positions 233, 308, 315, and 318 each coordinate Zn(2+).

The protein belongs to the RNA polymerase beta' chain family. RpoC2 subfamily. In plastids the minimal PEP RNA polymerase catalytic core is composed of four subunits: alpha, beta, beta', and beta''. When a (nuclear-encoded) sigma factor is associated with the core the holoenzyme is formed, which can initiate transcription. The cofactor is Zn(2+).

The protein resides in the plastid. It localises to the chloroplast. The enzyme catalyses RNA(n) + a ribonucleoside 5'-triphosphate = RNA(n+1) + diphosphate. Functionally, DNA-dependent RNA polymerase catalyzes the transcription of DNA into RNA using the four ribonucleoside triphosphates as substrates. In Pinus thunbergii (Japanese black pine), this protein is DNA-directed RNA polymerase subunit beta''.